Reading from the N-terminus, the 292-residue chain is Nitrogenase iron protein 1 (292 aa).

An ATP-binding site is contributed by 12 to 19 (GKGGIGKS). A [4Fe-4S] cluster-binding site is contributed by C101. R104 bears the ADP-ribosylarginine; by dinitrogenase reductase ADP-ribosyltransferase mark. Position 135 (C135) interacts with [4Fe-4S] cluster.

It belongs to the NifH/BchL/ChlL family. Homodimer. [4Fe-4S] cluster serves as cofactor. Post-translationally, the reversible ADP-ribosylation of Arg-104 inactivates the nitrogenase reductase and regulates nitrogenase activity.

It carries out the reaction N2 + 8 reduced [2Fe-2S]-[ferredoxin] + 16 ATP + 16 H2O = H2 + 8 oxidized [2Fe-2S]-[ferredoxin] + 2 NH4(+) + 16 ADP + 16 phosphate + 6 H(+). The key enzymatic reactions in nitrogen fixation are catalyzed by the nitrogenase complex, which has 2 components: the iron protein and the molybdenum-iron protein. This Paenibacillus durus (Paenibacillus azotofixans) protein is Nitrogenase iron protein 1 (nifH1).